We begin with the raw amino-acid sequence, 437 residues long: Testis-specific Y-encoded-like protein 1 (437 aa).

Residues 1-81 (MSGLDGVKRT…QDAAGRGGTP (81 aa)) are disordered. Residues 11-26 (TPLQTHSIIISDQVPS) are compositionally biased toward polar residues. The span at 28–40 (QDAHQYLRLRDQS) shows a compositional bias: basic and acidic residues. Lysine 156 is covalently cross-linked (Glycyl lysine isopeptide (Lys-Gly) (interchain with G-Cter in SUMO2)).

The protein belongs to the nucleosome assembly protein (NAP) family. In terms of processing, ubiquitinated by the CRL2(APPBP2) complex, which recognizes the Arg-Xaa-Xaa-Gly sequence at the C-terminus, leading to its degradation. In terms of tissue distribution, expressed in testis, ovary, liver, spleen, brain, kidney, prostate, lung, liver, and heart.

The protein resides in the nucleus. The protein localises to the nucleolus. The protein is Testis-specific Y-encoded-like protein 1 (TSPYL1) of Homo sapiens (Human).